Consider the following 299-residue polypeptide: Glutamate formimidoyltransferase (299 aa).

His-82 acts as the For formimidoyltransferase activity in catalysis. 163 to 172 (GDRKIHPTAG) is a folate binding site.

The protein belongs to the formiminotransferase family.

It localises to the cytoplasm. It carries out the reaction (6S)-5-formyl-5,6,7,8-tetrahydrofolate + L-glutamate = N-formyl-L-glutamate + (6S)-5,6,7,8-tetrahydrofolate + H(+). The enzyme catalyses 5-formimidoyltetrahydrofolate + L-glutamate = N-formimidoyl-L-glutamate + (6S)-5,6,7,8-tetrahydrofolate. It catalyses the reaction (6S)-5-formyl-5,6,7,8-tetrahydrofolate + ATP = (6R)-5,10-methenyltetrahydrofolate + ADP + phosphate. It functions in the pathway amino-acid degradation; L-histidine degradation into L-glutamate; L-glutamate from N-formimidoyl-L-glutamate (transferase route): step 1/1. Its pathway is one-carbon metabolism; tetrahydrofolate interconversion. Catalyzes the transfer of the formyl group from N-formylglutamate to tetrahydrofolate (THF) to yield 5-formyltetrahydrofolate (5-CHO-THF) and glutamate (Glu). The triglutamate form of 5-CHO-THF (5-CHO-THF-Glu3) can also be used as substrate. It can also catalyze the transfer of the formimino group from N-formiminoglutamate to tetrahydrofolate (THF) to yield 5-formiminotetrahydrofolate (5-NH=CH-THF) and glutamate (Glu). It can replace YgfA to catalyze the irreversible ATP-dependent transformation of 5-CHO-THF to form 5,10-methenyltetrahydrofolate (5,10-CH=THF). The sequence is that of Glutamate formimidoyltransferase from Streptococcus pyogenes serotype M1.